Reading from the N-terminus, the 629-residue chain is tRNA uridine 5-carboxymethylaminomethyl modification enzyme MnmG (629 aa).

FAD-binding positions include Gly-13–Gly-18, Val-125, and Ser-180. Gly-273 to Phe-287 is a binding site for NAD(+). Gln-370 is an FAD binding site.

Belongs to the MnmG family. In terms of assembly, homodimer. Heterotetramer of two MnmE and two MnmG subunits. It depends on FAD as a cofactor.

It is found in the cytoplasm. Its function is as follows. NAD-binding protein involved in the addition of a carboxymethylaminomethyl (cmnm) group at the wobble position (U34) of certain tRNAs, forming tRNA-cmnm(5)s(2)U34. The protein is tRNA uridine 5-carboxymethylaminomethyl modification enzyme MnmG of Salmonella choleraesuis (strain SC-B67).